The chain runs to 61 residues: Peroxidase 1 (61 aa).

Positions 1 to 32 (DNTAKEKDSPANLSLRTCAAGDNAEQPLDPSR) are disordered. Asn12 carries an N-linked (GlcNAc...) asparagine glycan. Ca(2+) contacts are provided by Asp29, Ser31, and Asp36.

It belongs to the peroxidase family. Classical plant (class III) peroxidase subfamily. Ca(2+) is required as a cofactor. The cofactor is heme b.

It localises to the secreted. It carries out the reaction 2 a phenolic donor + H2O2 = 2 a phenolic radical donor + 2 H2O. Functionally, removal of H(2)O(2), oxidation of toxic reductants, biosynthesis and degradation of lignin, suberization, auxin catabolism, response to environmental stresses such as wounding, pathogen attack and oxidative stress. These functions might be dependent on each isozyme/isoform in each plant tissue. The chain is Peroxidase 1 from Vitis rotundifolia (Muscadine grape).